An 836-amino-acid polypeptide reads, in one-letter code: MLNKEEIIVPKNLEEEMKESYLRYSMSVIISRALPDARDGLKPSQRRILYAMKQLNLTPGVKHRKCAKICGDTSGDYHPHGESVIYPTLVRMAQDWAMRYPLVDGQGNFGSIDGDPAAAMRYTEARLTHSAIFLLEDLDKDTVDMVPNYDETKYEPVVFPSKFPNLLCNGSSGIAVGMATNIPPHNLGELIEATLLVLANSQTSIEDILEVMPGPDFPTGGIICGTEGIRSTYYTGRGKLRLRARMHVEENSDKQRENIILTEMPYNVNKSRLIEQIAELINEKTLTGISDVRDESDKDGIRVVLELKKGESSEVVINRLYKFTDVQVTFGANMLALDKNLPRTMNIHRMISAWIRHRMDVIQRRTRYELNKAEARAHILEGFLKALSCMDEVVKTIRESSNKEHAKQQLVELFSFSEAQALAILELRLYQLTGLEADKVQKEYSELLEKITYYRKVLAEEELVKDIIREELQELHKVHKTPRRTRIEMDAGDVRDIEDIISDESVIITISGDDYVKRMPVKVFREQKRGGQGVTGFDMKKGSDFLKAVYSASTKDYLLIFTNFGQCYWLKVWRLPEGERRAKGKPIINFLEGIRPGEQVAAVLNVKRFEQGEYLFLATKKGVVKKVSLDAFGSPRKKGIRALEIDDGDELIAARHIANDEEKVMLFTRLGMAVRFPHDKVRPMGRAARGVRGVSLKNEQDFVVSCQVVTEDQSVLVVCDNGFGKRSLVCDFRETNRGSVGVRSIVINQRNGDVLGAISVTDCDSILLMSAQGQAIRINMQDVRVMGRATQGVRLVNLREGDTLVAMEKLSINTESVETEENLAASVQSGQDTIEE.

The 467-residue stretch at 34 to 500 folds into the Topo IIA-type catalytic domain; sequence LPDARDGLKP…AGDVRDIEDI (467 aa). Tyr-122 acts as the O-(5'-phospho-DNA)-tyrosine intermediate in catalysis. The GyrA-box motif lies at 527–533; the sequence is QKRGGQG.

This sequence belongs to the type II topoisomerase GyrA/ParC subunit family. In terms of assembly, heterotetramer, composed of two GyrA and two GyrB chains. In the heterotetramer, GyrA contains the active site tyrosine that forms a transient covalent intermediate with DNA, while GyrB binds cofactors and catalyzes ATP hydrolysis.

The protein resides in the cytoplasm. It catalyses the reaction ATP-dependent breakage, passage and rejoining of double-stranded DNA.. Its function is as follows. A type II topoisomerase that negatively supercoils closed circular double-stranded (ds) DNA in an ATP-dependent manner to modulate DNA topology and maintain chromosomes in an underwound state. Negative supercoiling favors strand separation, and DNA replication, transcription, recombination and repair, all of which involve strand separation. Also able to catalyze the interconversion of other topological isomers of dsDNA rings, including catenanes and knotted rings. Type II topoisomerases break and join 2 DNA strands simultaneously in an ATP-dependent manner. This Chlamydia trachomatis serovar D (strain ATCC VR-885 / DSM 19411 / UW-3/Cx) protein is DNA gyrase subunit A.